Reading from the N-terminus, the 194-residue chain is Adenylate kinase isoenzyme 1 (194 aa).

Met1 is modified (N-acetylmethionine). 18–23 is an ATP binding site; the sequence is GSGKGT. Position 38 is a phosphoserine (Ser38). The segment at 38–67 is NMP; that stretch reads STGDLLRAEVSSGSARGKMLSEIMEKGQLV. Residues Thr39, Arg44, 65–67, 94–97, and Gln101 each bind AMP; these read QLV and GYPR. The tract at residues 131–141 is LID; it reads KRGETSGRVDD. Position 132 (Arg132) interacts with ATP. Arg138 and Arg149 together coordinate AMP. Residue Gly177 coordinates ATP.

The protein belongs to the adenylate kinase family. AK1 subfamily. As to quaternary structure, monomer. Mg(2+) is required as a cofactor.

Its subcellular location is the cytoplasm. The catalysed reaction is a ribonucleoside 5'-phosphate + ATP = a ribonucleoside 5'-diphosphate + ADP. It catalyses the reaction AMP + ATP = 2 ADP. The enzyme catalyses dAMP + ATP = dADP + ADP. It carries out the reaction dATP + AMP = dADP + ADP. The catalysed reaction is dAMP + dATP = 2 dADP. It catalyses the reaction a 2'-deoxyribonucleoside 5'-diphosphate + ATP = a 2'-deoxyribonucleoside 5'-triphosphate + ADP. The enzyme catalyses a ribonucleoside 5'-diphosphate + ATP = a ribonucleoside 5'-triphosphate + ADP. It carries out the reaction CDP + GTP = CTP + GDP. The catalysed reaction is GDP + ATP = GTP + ADP. It catalyses the reaction UDP + ATP = UTP + ADP. The enzyme catalyses GTP + UDP = UTP + GDP. It carries out the reaction dTDP + GTP = dTTP + GDP. The catalysed reaction is dCDP + GTP = dCTP + GDP. It catalyses the reaction dGDP + ATP = dGTP + ADP. The enzyme catalyses dADP + GTP = dATP + GDP. It carries out the reaction thiamine diphosphate + ADP = thiamine triphosphate + AMP. Its function is as follows. Catalyzes the reversible transfer of the terminal phosphate group between ATP and AMP. Also displays broad nucleoside diphosphate kinase activity. Plays an important role in cellular energy homeostasis and in adenine nucleotide metabolism. Also catalyzes at a very low rate the synthesis of thiamine triphosphate (ThTP) from thiamine diphosphate (ThDP) and ADP. This chain is Adenylate kinase isoenzyme 1, found in Bos taurus (Bovine).